Here is a 259-residue protein sequence, read N- to C-terminus: UPF0246 protein Avin_11220 (259 aa).

The protein belongs to the UPF0246 family.

This chain is UPF0246 protein Avin_11220, found in Azotobacter vinelandii (strain DJ / ATCC BAA-1303).